We begin with the raw amino-acid sequence, 255 residues long: uncharacterized protein (255 aa).

This is an uncharacterized protein from Bacillus subtilis (strain 168).